The sequence spans 695 residues: Protein EARLY FLOWERING 3 (695 aa).

Positions 1 to 11 (MKRGKDEEKIL) are enriched in basic and acidic residues. Disordered stretches follow at residues 1-33 (MKRGKDEEKILEPMFPRLHVNDADKGGPRAPPR), 48-75 (RFGDHGTMNSRSNNTSTLVHPGPSSQPC), 136-159 (RSQSHGRTKSGIEKEKHTPMVAPS), 216-283 (EKSA…REYS), and 541-653 (CSSQ…QTTR). Residues 54 to 74 (TMNSRSNNTSTLVHPGPSSQP) show a composition bias toward polar residues. Composition is skewed to basic and acidic residues over residues 216 to 226 (EKSASSHDRVN), 234 to 253 (QESRNRLYRDGGKTRLKDTD), and 260 to 283 (LATENHSQEGHGSPEDIDNDREYS). An interaction with ELF3 region spans residues 261–484 (ATENHSQEGH…VMSPSEGLIY (224 aa)). Polar residues-rich tracts occupy residues 551–567 (PNEQMNQFGHPGNLQNT) and 579–588 (APQQQQQPTK). Low complexity-rich tracts occupy residues 598–616 (QGSTGSSPSGPQGISGSKS) and 636–653 (TMTTTTTTTRTTVTQTTR).

In terms of assembly, interacts specifically with both Pr and Pfr forms of phytochrome B. Interacts with ELF4. May form a homodimer.

It localises to the nucleus. In terms of biological role, may be a transcription factor part of a circadian clock input pathway. Acts within a 'zeitnehmer' feedback loop and is involved in its own circadian regulation. Has no role in regulating circadian clock function in the dark. Part of a corepressor complex consisting of ELF4, ELF3, and LUX involved in the transcriptional regulation of APRR9. The activity of the protein may be decreased in long day conditions due to its interaction with phytochrome B (phyB). Can regulate the initiation of flowering independently of phyB. Also involved in responses to nematode parasitism, like the formation of the nematode feeding structure. The chain is Protein EARLY FLOWERING 3 (ELF3) from Arabidopsis thaliana (Mouse-ear cress).